The sequence spans 227 residues: Cytidylate kinase (227 aa).

Residue 12–20 (GPSGAGKGT) participates in ATP binding.

Belongs to the cytidylate kinase family. Type 1 subfamily.

The protein localises to the cytoplasm. The catalysed reaction is CMP + ATP = CDP + ADP. The enzyme catalyses dCMP + ATP = dCDP + ADP. This chain is Cytidylate kinase, found in Xanthomonas axonopodis pv. citri (strain 306).